Consider the following 1414-residue polypeptide: DNA-directed RNA polymerase subunit beta' (1414 aa).

Zn(2+) is bound by residues Cys-72, Cys-74, Cys-87, and Cys-90. Positions 463, 465, and 467 each coordinate Mg(2+). Residues Cys-811, Cys-885, Cys-892, and Cys-895 each coordinate Zn(2+).

It belongs to the RNA polymerase beta' chain family. In terms of assembly, the RNAP catalytic core consists of 2 alpha, 1 beta, 1 beta' and 1 omega subunit. When a sigma factor is associated with the core the holoenzyme is formed, which can initiate transcription. It depends on Mg(2+) as a cofactor. Zn(2+) is required as a cofactor.

It catalyses the reaction RNA(n) + a ribonucleoside 5'-triphosphate = RNA(n+1) + diphosphate. Functionally, DNA-dependent RNA polymerase catalyzes the transcription of DNA into RNA using the four ribonucleoside triphosphates as substrates. In Roseobacter denitrificans (strain ATCC 33942 / OCh 114) (Erythrobacter sp. (strain OCh 114)), this protein is DNA-directed RNA polymerase subunit beta'.